Reading from the N-terminus, the 178-residue chain is CASP-like protein 2U3 (178 aa).

At 1–4 (MACR) the chain is on the cytoplasmic side. The chain crosses the membrane as a helical span at residues 5-25 (VMEVLLRVLAILLSIAGALVM). Residues 26–52 (AKDKQDTFVMLGTVPVPLYARHSYVEA) are Extracellular-facing. The chain crosses the membrane as a helical span at residues 53–73 (FVFLVYANGIVAIYCFIAVLL). The Cytoplasmic segment spans residues 74 to 80 (SLLAKSR). Residues 81–101 (VLAGLLFFMDQALAYLLLAAA) traverse the membrane as a helical segment. Residues 102 to 132 (AASTEVAYIAKRGEKKLVWGEVCSNFEHFCN) are Extracellular-facing. A helical transmembrane segment spans residues 133 to 153 (LVGVSLVLTFLSVLVLVTLAI). The Cytoplasmic segment spans residues 154–178 (LSGKRLFGHPPLCAPPSTPPVHQGV).

Belongs to the Casparian strip membrane proteins (CASP) family. In terms of assembly, homodimer and heterodimers.

It is found in the cell membrane. In Pteridium aquilinum subsp. aquilinum (Bracken fern), this protein is CASP-like protein 2U3.